The sequence spans 1383 residues: DNA-directed RNA polymerase subunit beta'' (1383 aa).

Zn(2+)-binding residues include Cys-220, Cys-289, Cys-296, and Cys-299.

The protein belongs to the RNA polymerase beta' chain family. RpoC2 subfamily. In terms of assembly, in plastids the minimal PEP RNA polymerase catalytic core is composed of four subunits: alpha, beta, beta', and beta''. When a (nuclear-encoded) sigma factor is associated with the core the holoenzyme is formed, which can initiate transcription. The cofactor is Zn(2+).

The protein resides in the plastid. The protein localises to the chloroplast. The catalysed reaction is RNA(n) + a ribonucleoside 5'-triphosphate = RNA(n+1) + diphosphate. Its function is as follows. DNA-dependent RNA polymerase catalyzes the transcription of DNA into RNA using the four ribonucleoside triphosphates as substrates. This chain is DNA-directed RNA polymerase subunit beta'', found in Oenothera elata subsp. hookeri (Hooker's evening primrose).